The following is a 587-amino-acid chain: Protein cereblon (587 aa).

Disordered stretches follow at residues 1-56 (MDEE…PAEY), 78-113 (DVLQDDTASEGSHPSSDMSLESPGSEDDSDVQGLPN), and 157-195 (FSQERRRSRTSEETSQEEAAEEPDDPPPQQPPLPPIDIG). Polar residues-rich tracts occupy residues 22–31 (EDQSQSQGLQ) and 86–96 (SEGSHPSSDMS). Residues 159 to 168 (QERRRSRTSE) are compositionally biased toward basic and acidic residues. Over residues 170–181 (TSQEEAAEEPDD) the composition is skewed to acidic residues. Residues 182-191 (PPPQQPPLPP) show a composition bias toward pro residues. Positions 227-453 (HMLIFLHHHI…LIKSTFKDET (227 aa)) constitute a Lon N-terminal domain. A CULT domain is found at 452–561 (ETLFFCRYCN…LSGSSVRIGK (110 aa)). Residues Cys-457, Cys-460, Cys-526, and Cys-529 each coordinate Zn(2+).

This sequence belongs to the CRBN family. In terms of assembly, likely a component of a DCX (DDB1-CUL4-X-box) protein ligase complex. May interact with pic/DDB1. Ubiquitinated.

The protein resides in the nucleus. Its pathway is protein modification; protein ubiquitination. Its function is as follows. Substrate recognition component of a DCX (DDB1-CUL4-X-box) E3 protein ligase complex that mediates the ubiquitination and subsequent proteasomal degradation of target proteins. Has an essential role in mediating growth by negatively regulating insulin signaling. It also has a role in maintaining presynaptic function in the neuromuscular junction synapses of third-instar larvae. This Drosophila simulans (Fruit fly) protein is Protein cereblon.